Consider the following 744-residue polypeptide: Tripartite motif-containing protein 3 (744 aa).

Residue Ala-2 is modified to N-acetylalanine. Residues 2 to 290 (AKREDSPGPE…LAAQAFPERP (289 aa)) are interaction with KIF21B. Phosphoserine is present on Ser-7. The segment at 22–63 (CSICLDRYRCPKVLPCLHTFCERCLQNYIPPQSLTLSCPVCR) adopts an RING-type zinc-finger fold. Residues 110 to 151 (GRPLSCPNHEGKTMEFYCEACETAMCGECRAGEHREHGTVLL) form a B box-type zinc finger. Positions 115, 118, 138, and 143 each coordinate Zn(2+). Positions 153–224 (DVVEQHKAAL…RKQALVSDLE (72 aa)) form a coiled coil. Residues 317 to 418 (TTSAAAHETV…VRGSPFRVRA (102 aa)) form a Filamin repeat. The segment at 420-462 (RPGDLPPSPDDVKRRVKSPGGPGSHVRQKAVRRPSSMYSTGGK) is disordered. Ser-427 is subject to Phosphoserine. NHL repeat units follow at residues 473–516 (VFRV…FSNE), 520–563 (KFRF…FSPE), 564–605 (GKFK…FQPN), 609–652 (VGRF…YSAD), 656–699 (LFKF…FDSS), and 700–743 (GSFL…YRYL).

Belongs to the TRIM/RBCC family. As to quaternary structure, forms homooligomers. Interacts with TRIM2; this interaction reduces TRIM2 activity. Associates with myosin-Vb (MYO5B) and alpha-actinin-4 (ACTN4). Component of the CART complex, at least composed of ACTN4, HGS/HRS, MYO5B and TRIM3. Interacts with ZFYVE28/LST2. Interacts with KIF21B. Highly expressed in the brain, moderate levels in the lung, very low levels in the liver, kidney and heart. In the brain, expression was highest in the cerebellum. Expression in the brain is found at low levels at embryonic day 15 and then increases during the first two postnatal weeks before decreasing through adulthood.

It is found in the cytoplasm. The protein localises to the early endosome. Its subcellular location is the golgi apparatus. The protein resides in the trans-Golgi network. It localises to the cell projection. It is found in the dendrite. It catalyses the reaction S-ubiquitinyl-[E2 ubiquitin-conjugating enzyme]-L-cysteine + [acceptor protein]-L-lysine = [E2 ubiquitin-conjugating enzyme]-L-cysteine + N(6)-ubiquitinyl-[acceptor protein]-L-lysine.. In terms of biological role, E3 ubiquitin ligase that plays essential roles in neuronal functions such as regulation of neuronal plasticity, learning, and memory. In addition to its neuronal functions, participates in other biological processes such as innate immunity or cell cycle regulation. Component of the cytoskeleton-associated recycling or transport complex in neurons, polyubiquitinates gamma-actin, thus regulating neuronal plasticity, learning, and memory. Ubiquitinates postsynaptic scaffold GKAP, a neuronal substrate involved in synaptic remodeling and thereby modulates dendritic spine morphology. Positively regulates motility of microtubule-dependent motor protein KIF21B. Induces growth arrest via its RING-dependent E3 ligase activity and ubiquinates CDKN1A. Positively regulates TLR3-mediated signaling by mediating 'Lys-63'-linked polyubiquitination of TLR3. In turn, promotes the recognition and sorting of polyubiquitinated TLR3 by the ESCRT complexes. This Rattus norvegicus (Rat) protein is Tripartite motif-containing protein 3 (Trim3).